Here is a 599-residue protein sequence, read N- to C-terminus: Interleukin-18 receptor accessory protein (599 aa).

Residues 1–19 (MLCLGWIFLWLVAGERIKG) form the signal peptide. At 20 to 356 (FNISGCSTKK…TQSVQLKEKR (337 aa)) the chain is on the extracellular side. 3 N-linked (GlcNAc...) asparagine glycosylation sites follow: Asn21, Asn119, and Asn152. Cys46 and Cys126 form a disulfide bridge. 2 consecutive Ig-like C2-type domains span residues 149–235 (PQTN…WTVR) and 251–353 (PDIL…VQLK). Intrachain disulfides connect Cys155-Cys180, Cys175-Cys221, Cys180-Cys221, and Cys273-Cys337. N-linked (GlcNAc...) asparagine glycosylation is present at Asn345. Residues 357–377 (GVVLLYILLGTIGTLVAVLAA) form a helical membrane-spanning segment. Residues 378-599 (SALLYRHWIE…TGRSSQPKEW (222 aa)) are Cytoplasmic-facing. Residues 406–559 (KDFDAFVSYA…RFWAKMRYHM (154 aa)) enclose the TIR domain. The active site involves Glu493.

The protein belongs to the interleukin-1 receptor family. In terms of assembly, forms a ternary complex with IL18 and IL18R1. Within this complex, IL18R1 is involved in ligand-binding and IL18RAP in signaling leading to NF-kappa-B and JNK activation. N-glycosylated. Detected in adrenal gland, bone marrow, brain, fetal brain, fetal liver, heart, kidney, lung, liver, peripheral blood leukocytes, placenta, prostate, salivary gland, skeletal muscle, spinal cord, testis, thymus, thyroid, trachea and uterus. Strongly expressed in peripheral blood leukocytes and spleen and, to a lesser extent, in colon. Specifically coexpressed with IL18R1 in T-helper 1 (Th1)cells.

The protein resides in the cell membrane. It catalyses the reaction NAD(+) + H2O = ADP-D-ribose + nicotinamide + H(+). In terms of biological role, within the IL18 receptor complex, does not mediate IL18-binding, but involved in IL18-dependent signal transduction, leading to NF-kappa-B and JNK activation. May play a role in IL18-mediated IFNG synthesis from T-helper 1 (Th1) cells. In Homo sapiens (Human), this protein is Interleukin-18 receptor accessory protein.